We begin with the raw amino-acid sequence, 488 residues long: Stromelysin-3 (488 aa).

Residues 1–31 form the signal peptide; sequence MAPAAWLRSAAARALLPPMLLLLLQPPPLLA. The propeptide at 32–97 is activation peptide; it reads RALPPDAHHL…GLSARNRQKR (66 aa). Residues 41–93 are disordered; it reads LHAERRGPQPWHAALPSSPAPAPATQEAPRPASSLRPPRCGVPDPSDGLSARN. Over residues 50-79 the composition is skewed to low complexity; sequence PWHAALPSSPAPAPATQEAPRPASSLRPPR. Positions 78 to 85 match the Cysteine switch motif; sequence PRCGVPDP. Positions 80 and 166 each coordinate Zn(2+). Ca(2+)-binding residues include Asp171, Gly172, Gly174, and Ile176. The Zn(2+) site is built by His179, His192, and His215. Glu216 is a catalytic residue. Residues His219 and His225 each coordinate Zn(2+). Hemopexin repeat units follow at residues 291–339, 340–382, 384–432, and 433–480; these read PDAC…WQGL, PSPV…ELGL, RFPV…WRGV, and PSEI…FFGC. Cys294 and Cys480 form a disulfide bridge.

It belongs to the peptidase M10A family. The cofactor is Ca(2+). It depends on Zn(2+) as a cofactor. Post-translationally, the precursor is cleaved by a furin endopeptidase. As to expression, specifically expressed in stromal cells of breast carcinomas.

It is found in the secreted. Its subcellular location is the extracellular space. The protein resides in the extracellular matrix. Its function is as follows. May play an important role in the progression of epithelial malignancies. The sequence is that of Stromelysin-3 (MMP11) from Homo sapiens (Human).